A 487-amino-acid chain; its full sequence is Probable cytochrome P450 516A1 (487 aa).

A helical transmembrane segment spans residues 1 to 21; it reads MIILLLSIIIFILYIVKIFKN. Cysteine 434 contributes to the heme binding site.

It belongs to the cytochrome P450 family. Requires heme as cofactor.

It is found in the membrane. The protein is Probable cytochrome P450 516A1 (cyp516A1) of Dictyostelium discoideum (Social amoeba).